The primary structure comprises 270 residues: uncharacterized protein (270 aa).

An N-terminal signal peptide occupies residues Met1–Gly22. Cys23 carries N-palmitoyl cysteine lipidation. Cys23 is lipidated: S-diacylglycerol cysteine.

It belongs to the staphylococcal tandem lipoprotein family.

The protein resides in the cell membrane. This is an uncharacterized protein from Staphylococcus aureus (strain NCTC 8325 / PS 47).